An 876-amino-acid polypeptide reads, in one-letter code: DDB1- and CUL4-associated factor 6 (876 aa).

WD repeat units follow at residues 49 to 88 (VHDGCVNTICWNDTGEYILSGSDDTKLVISNPYSRKVLTT), 92 to 133 (GHRA…ETNR), 139 to 179 (CHYG…SCTK), 189 to 229 (NCRR…TRAT), and 251 to 290 (NKSCRVTSLCYSEDGQEILVSYSSDYIYLFDPKDDTAREL). 2 stretches are compositionally biased toward basic and acidic residues: residues 288 to 303 (RELKTPSAEERREELR) and 312 to 334 (LRGDWSDTGPRARPESERERDGE). Disordered regions lie at residues 288–340 (RELK…PNVS), 355–391 (EASEVAQSNRGRGRPRPRGGTNQPDVSTLPTVPSSPN), 408–485 (LQPS…TEGT), 498–645 (WSST…NPEL), and 658–691 (EDPSARDSALQDTDDSDDDPVLIPGARYRTGPGD). Serine 336 is modified (phosphoserine). Polar residues-rich tracts occupy residues 375–391 (TNQPDVSTLPTVPSSPN) and 409–422 (QPSTSSTDPVQAQA). The span at 456–466 (HQSDNSNERLS) shows a compositional bias: basic and acidic residues. A compositionally biased stretch (low complexity) spans 499 to 510 (SSTASSSRGNGS). A compositionally biased stretch (basic and acidic residues) spans 534-544 (SETRAPEELSE). Composition is skewed to polar residues over residues 550–562 (ENLTQNQIDTAQL), 571–584 (DSNSGEKNNPSQDS), 603–613 (EQASTESATRH), and 621–645 (PSQTEAIEQASTESATRHTSANPEL). Position 665 is a phosphoserine (serine 665). Position 670 is a phosphothreonine (threonine 670). The residue at position 673 (serine 673) is a Phosphoserine. An IQ domain is found at 692–721 (RRSAVARIQEFFRRRKERKEMEELDTLNIR). 2 WD repeats span residues 734-772 (NSRTMIKEANFWGANFVMSGSDCGHIFIWDRHTAEHLML) and 775-814 (ADNHVVNCLQPHPFDPILASSGIDYDIKIWSPLEESRIFN). Serine 863 and serine 866 each carry phosphoserine.

As to quaternary structure, interacts with the nuclear receptors NR3C1 and AR in the presence of ligand. Interacts with DDB1, CUL4A and CUL4B.

Its subcellular location is the nucleus. Its pathway is protein modification; protein ubiquitination. In terms of biological role, ligand-dependent coactivator of nuclear receptors. Enhance transcriptional activity of the nuclear receptors NR3C1 and AR. May function as a substrate receptor for CUL4-DDB1 E3 ubiquitin-protein ligase complex. The polypeptide is DDB1- and CUL4-associated factor 6 (Dcaf6) (Mus musculus (Mouse)).